A 265-amino-acid chain; its full sequence is 2-C-methyl-D-erythritol 4-phosphate cytidylyltransferase (265 aa).

Residues 231-241 (DRGGASREAER) are compositionally biased toward basic and acidic residues. A disordered region spans residues 231-265 (DRGGASREAERSAMPSAATSVFSGARSAASGSEEV). Positions 253 to 265 (SGARSAASGSEEV) are enriched in low complexity.

Belongs to the IspD/TarI cytidylyltransferase family. IspD subfamily.

The catalysed reaction is 2-C-methyl-D-erythritol 4-phosphate + CTP + H(+) = 4-CDP-2-C-methyl-D-erythritol + diphosphate. Its pathway is isoprenoid biosynthesis; isopentenyl diphosphate biosynthesis via DXP pathway; isopentenyl diphosphate from 1-deoxy-D-xylulose 5-phosphate: step 2/6. Functionally, catalyzes the formation of 4-diphosphocytidyl-2-C-methyl-D-erythritol from CTP and 2-C-methyl-D-erythritol 4-phosphate (MEP). The chain is 2-C-methyl-D-erythritol 4-phosphate cytidylyltransferase from Xanthomonas campestris pv. campestris (strain B100).